Consider the following 308-residue polypeptide: Ornithine carbamoyltransferase (308 aa).

Residues 57 to 60 (STRT), Q84, R108, and 135 to 138 (HPCQ) each bind carbamoyl phosphate. L-ornithine-binding positions include N166, D224, and 228 to 229 (SM). Residues 264-265 (CL) and R292 each bind carbamoyl phosphate.

It belongs to the aspartate/ornithine carbamoyltransferase superfamily. OTCase family.

It localises to the cytoplasm. It catalyses the reaction carbamoyl phosphate + L-ornithine = L-citrulline + phosphate + H(+). The protein operates within amino-acid degradation; L-arginine degradation via ADI pathway; carbamoyl phosphate from L-arginine: step 2/2. Functionally, reversibly catalyzes the transfer of the carbamoyl group from carbamoyl phosphate (CP) to the N(epsilon) atom of ornithine (ORN) to produce L-citrulline. The chain is Ornithine carbamoyltransferase from Ralstonia pickettii (strain 12J).